The sequence spans 199 residues: NAD(P)H dehydrogenase (quinone) (199 aa).

The Flavodoxin-like domain occupies Ile4–Val190. FMN-binding positions include Ser10 to Ile15 and Thr79 to Phe81. NAD(+) is bound at residue Tyr12. Trp99 provides a ligand contact to substrate. FMN is bound by residues Ser114 to Gly119 and His134.

This sequence belongs to the WrbA family. It depends on FMN as a cofactor.

The enzyme catalyses a quinone + NADH + H(+) = a quinol + NAD(+). It carries out the reaction a quinone + NADPH + H(+) = a quinol + NADP(+). In Serratia proteamaculans (strain 568), this protein is NAD(P)H dehydrogenase (quinone).